Reading from the N-terminus, the 269-residue chain is Formamidopyrimidine-DNA glycosylase (269 aa).

The active-site Schiff-base intermediate with DNA is P2. E3 functions as the Proton donor in the catalytic mechanism. The active-site Proton donor; for beta-elimination activity is K57. Positions 90, 109, and 150 each coordinate DNA. Residues 235–269 (QVYGRGGEPCRVCGTPIQMAKHGQRSTFFCPACQH) form an FPG-type zinc finger. The active-site Proton donor; for delta-elimination activity is the R259.

The protein belongs to the FPG family. Monomer. The cofactor is Zn(2+).

The enzyme catalyses Hydrolysis of DNA containing ring-opened 7-methylguanine residues, releasing 2,6-diamino-4-hydroxy-5-(N-methyl)formamidopyrimidine.. The catalysed reaction is 2'-deoxyribonucleotide-(2'-deoxyribose 5'-phosphate)-2'-deoxyribonucleotide-DNA = a 3'-end 2'-deoxyribonucleotide-(2,3-dehydro-2,3-deoxyribose 5'-phosphate)-DNA + a 5'-end 5'-phospho-2'-deoxyribonucleoside-DNA + H(+). Functionally, involved in base excision repair of DNA damaged by oxidation or by mutagenic agents. Acts as a DNA glycosylase that recognizes and removes damaged bases. Has a preference for oxidized purines, such as 7,8-dihydro-8-oxoguanine (8-oxoG). Has AP (apurinic/apyrimidinic) lyase activity and introduces nicks in the DNA strand. Cleaves the DNA backbone by beta-delta elimination to generate a single-strand break at the site of the removed base with both 3'- and 5'-phosphates. The polypeptide is Formamidopyrimidine-DNA glycosylase (Sodalis glossinidius (strain morsitans)).